Here is a 177-residue protein sequence, read N- to C-terminus: MTDSTHPTPSARPPRQPRTGTTGTGARKAGSKSGRSRAREFALQALYQHLVGGNDATAIDVFTRDLSGFHKADAAHYDALLHGCITTAQYMDELIAPQLDRKMSEISPIEHAVMWIGVYEFQHCQDVPWRVVINECIELAKEFGGTDGHKYVNGVLNGLAPQLRATEVAADKAAARG.

A disordered region spans residues 1 to 35 (MTDSTHPTPSARPPRQPRTGTTGTGARKAGSKSGR). The span at 17–28 (PRTGTTGTGARK) shows a compositional bias: low complexity.

The protein belongs to the NusB family.

Involved in transcription antitermination. Required for transcription of ribosomal RNA (rRNA) genes. Binds specifically to the boxA antiterminator sequence of the ribosomal RNA (rrn) operons. The protein is Transcription antitermination protein NusB of Acidovorax sp. (strain JS42).